The primary structure comprises 381 residues: Tetraacyldisaccharide 4'-kinase (381 aa).

Residue 78–85 coordinates ATP; it reads AVGGTGKT.

The protein belongs to the LpxK family.

The enzyme catalyses a lipid A disaccharide + ATP = a lipid IVA + ADP + H(+). The protein operates within glycolipid biosynthesis; lipid IV(A) biosynthesis; lipid IV(A) from (3R)-3-hydroxytetradecanoyl-[acyl-carrier-protein] and UDP-N-acetyl-alpha-D-glucosamine: step 6/6. Functionally, transfers the gamma-phosphate of ATP to the 4'-position of a tetraacyldisaccharide 1-phosphate intermediate (termed DS-1-P) to form tetraacyldisaccharide 1,4'-bis-phosphate (lipid IVA). The sequence is that of Tetraacyldisaccharide 4'-kinase from Syntrophobacter fumaroxidans (strain DSM 10017 / MPOB).